The following is a 155-amino-acid chain: MSRRSTAEKKTAKSDPIYHNRLVNMVVNRILKNGKKSLAYRILYRAIKNIQQKTEKNPLSVLRQAIRRVTPNVTVKARRVGGSTYRVPVEIRSTQGKVLAIRWLLGASRKRPGRNMDFKLSHELMDAARGNGNAIRKKEETHRMAXANXAFAHFR.

It belongs to the universal ribosomal protein uS7 family. As to quaternary structure, part of the 30S ribosomal subunit.

Its subcellular location is the plastid. The protein resides in the chloroplast. In terms of biological role, one of the primary rRNA binding proteins, it binds directly to 16S rRNA where it nucleates assembly of the head domain of the 30S subunit. The chain is Small ribosomal subunit protein uS7c (rps7) from Cedrus deodara (Deodar cedar).